Consider the following 286-residue polypeptide: Transmembrane protein 156 (286 aa).

Residues 1-4 lie on the Cytoplasmic side of the membrane; sequence MTET. The helical transmembrane segment at 5–25 threads the bilayer; sequence AFLKLFVAIVITFILVLPEFF. At 26–214 the chain is on the extracellular side; that stretch reads KTPKERTLEL…KSVTCSMKIT (189 aa). Asparagine 45, asparagine 54, asparagine 76, and asparagine 142 each carry an N-linked (GlcNAc...) asparagine glycan. The helical transmembrane segment at 215-235 threads the bilayer; that stretch reads WYVLVLFVFMLGIIFIIYKIL. The Cytoplasmic segment spans residues 236 to 286; the sequence is EEHRRVWRRQSHNYKSSSVLFRGHDSGKLSTLNVRVIPGYPWTIWTRDFDE.

Its subcellular location is the membrane. The protein is Transmembrane protein 156 (Tmem156) of Rattus norvegicus (Rat).